The primary structure comprises 251 residues: 1-(5-phosphoribosyl)-5-[(5-phosphoribosylamino)methylideneamino] imidazole-4-carboxamide isomerase (251 aa).

Residue Asp8 is the Proton acceptor of the active site. The active-site Proton donor is Asp131.

The protein belongs to the HisA/HisF family.

It localises to the cytoplasm. It carries out the reaction 1-(5-phospho-beta-D-ribosyl)-5-[(5-phospho-beta-D-ribosylamino)methylideneamino]imidazole-4-carboxamide = 5-[(5-phospho-1-deoxy-D-ribulos-1-ylimino)methylamino]-1-(5-phospho-beta-D-ribosyl)imidazole-4-carboxamide. The protein operates within amino-acid biosynthesis; L-histidine biosynthesis; L-histidine from 5-phospho-alpha-D-ribose 1-diphosphate: step 4/9. The chain is 1-(5-phosphoribosyl)-5-[(5-phosphoribosylamino)methylideneamino] imidazole-4-carboxamide isomerase from Burkholderia vietnamiensis (strain G4 / LMG 22486) (Burkholderia cepacia (strain R1808)).